Consider the following 417-residue polypeptide: Serine hydroxymethyltransferase (417 aa).

(6S)-5,6,7,8-tetrahydrofolate-binding positions include leucine 121 and 125–127 (GHL). At lysine 230 the chain carries N6-(pyridoxal phosphate)lysine. (6S)-5,6,7,8-tetrahydrofolate is bound at residue 355–357 (SPF).

The protein belongs to the SHMT family. Homodimer. The cofactor is pyridoxal 5'-phosphate.

The protein localises to the cytoplasm. The enzyme catalyses (6R)-5,10-methylene-5,6,7,8-tetrahydrofolate + glycine + H2O = (6S)-5,6,7,8-tetrahydrofolate + L-serine. Its pathway is one-carbon metabolism; tetrahydrofolate interconversion. It participates in amino-acid biosynthesis; glycine biosynthesis; glycine from L-serine: step 1/1. In terms of biological role, catalyzes the reversible interconversion of serine and glycine with tetrahydrofolate (THF) serving as the one-carbon carrier. This reaction serves as the major source of one-carbon groups required for the biosynthesis of purines, thymidylate, methionine, and other important biomolecules. Also exhibits THF-independent aldolase activity toward beta-hydroxyamino acids, producing glycine and aldehydes, via a retro-aldol mechanism. The protein is Serine hydroxymethyltransferase of Legionella pneumophila (strain Lens).